We begin with the raw amino-acid sequence, 80 residues long: Protein transport protein SSS1 (80 aa).

The Cytoplasmic portion of the chain corresponds to 1-46 (MARASEKGEEKKQSNNQVEKLVEAPVEFVREGTQFLAKCKKPDLKE). A helical membrane pass occupies residues 47–75 (YTKIVKAVGIGFIAVGIIGYAIKLIHIPI). Topologically, residues 76-80 (RYVIV) are extracellular.

The protein belongs to the SecE/SEC61-gamma family. Component of the heterotrimeric Sec61 complex, which is composed of SSH1, SBH1 and SSS1. Presumably three to four Sec61 heterotrimers assemble into an oligomeric ring with a central aqueous pore. In cotranslational ER import, the pore diameter varies from 9-15 A in a ribosome-free resting state to 40-60 A in a functional state when associated with the ribosome. The Sec61 complex is part of a channel-forming translocon complex whose composition seem to change dependent upon different functional states. During post-translational ER import the Sec61 complex associates with the Sec62/63 complex to form the Sec complex. SSH1 is a component of the heterotrimeric Ssh1 complex, which is composed of SSH1, SBH2 and SSS1. SSS1 interacts with OST1, OST4, SWP1 and WBP1, components of the OT complex.

The protein resides in the endoplasmic reticulum membrane. Functionally, part of the Sec61 complex, which is the major component of channel-forming translocon complex that mediates protein translocation across the endoplasmic reticulum (ER). The functional states of the translocon complex include co- and post-translational ER import, cotranslational membrane protein integration and retrograde transport of misfolded proteins out of the ER. In the cotranslational pathway, ribosomes synthesizing presecretory proteins are targeted to the translocon by the cytosolic signal recognition particle (SRP) and its ER-localized receptor. The association of the Sec61 complex with the ribosome is mediated by the 28S rRNA of the large ribosomal subunit. SRP-independent post-translational translocation requires the association of additional factors, such as the Sec62/63 complex and KAR2. Also part of the Ssh1 complex, which probably is the major component of a channel-forming translocon complex that may function exclusively in the cotranslational pathway of protein ER import. The protein is Protein transport protein SSS1 (SSS1) of Saccharomyces cerevisiae (strain ATCC 204508 / S288c) (Baker's yeast).